A 419-amino-acid polypeptide reads, in one-letter code: Gamma-glutamyl phosphate reductase (419 aa).

Belongs to the gamma-glutamyl phosphate reductase family.

The protein resides in the cytoplasm. It catalyses the reaction L-glutamate 5-semialdehyde + phosphate + NADP(+) = L-glutamyl 5-phosphate + NADPH + H(+). It participates in amino-acid biosynthesis; L-proline biosynthesis; L-glutamate 5-semialdehyde from L-glutamate: step 2/2. In terms of biological role, catalyzes the NADPH-dependent reduction of L-glutamate 5-phosphate into L-glutamate 5-semialdehyde and phosphate. The product spontaneously undergoes cyclization to form 1-pyrroline-5-carboxylate. The protein is Gamma-glutamyl phosphate reductase of Caulobacter sp. (strain K31).